The primary structure comprises 351 residues: Biotin synthase (351 aa).

Residues Asn-48–Asp-265 form the Radical SAM core domain. Residues Cys-63, Cys-67, and Cys-70 each coordinate [4Fe-4S] cluster. Residues Cys-107, Cys-139, Cys-199, and Arg-269 each contribute to the [2Fe-2S] cluster site.

It belongs to the radical SAM superfamily. Biotin synthase family. In terms of assembly, homodimer. [4Fe-4S] cluster serves as cofactor. Requires [2Fe-2S] cluster as cofactor.

It catalyses the reaction (4R,5S)-dethiobiotin + (sulfur carrier)-SH + 2 reduced [2Fe-2S]-[ferredoxin] + 2 S-adenosyl-L-methionine = (sulfur carrier)-H + biotin + 2 5'-deoxyadenosine + 2 L-methionine + 2 oxidized [2Fe-2S]-[ferredoxin]. It participates in cofactor biosynthesis; biotin biosynthesis; biotin from 7,8-diaminononanoate: step 2/2. Catalyzes the conversion of dethiobiotin (DTB) to biotin by the insertion of a sulfur atom into dethiobiotin via a radical-based mechanism. The sequence is that of Biotin synthase from Leptospira interrogans serogroup Icterohaemorrhagiae serovar copenhageni (strain Fiocruz L1-130).